Reading from the N-terminus, the 92-residue chain is Kinetoplastid membrane protein 11B (92 aa).

The protein belongs to the KMP-11 family. As to quaternary structure, monomer.

It localises to the cytoplasm. The protein resides in the cytoskeleton. The protein localises to the cell projection. It is found in the cilium. Its subcellular location is the flagellum. In terms of biological role, may be involved in the regulation of the cytoskeleton through interaction with the subpellicular microtubules. May be involved in parasite mobility and attachment to the surface of the host cell. Behaves as a strong immunogen during infection. The sequence is that of Kinetoplastid membrane protein 11B (KMP-11B) from Leishmania infantum.